We begin with the raw amino-acid sequence, 444 residues long: Methylenetetrahydrofolate--tRNA-(uracil-5-)-methyltransferase TrmFO (444 aa).

FAD is bound at residue 10 to 15 (GAGLAG).

It belongs to the MnmG family. TrmFO subfamily. Requires FAD as cofactor.

It localises to the cytoplasm. The enzyme catalyses uridine(54) in tRNA + (6R)-5,10-methylene-5,6,7,8-tetrahydrofolate + NADH + H(+) = 5-methyluridine(54) in tRNA + (6S)-5,6,7,8-tetrahydrofolate + NAD(+). It carries out the reaction uridine(54) in tRNA + (6R)-5,10-methylene-5,6,7,8-tetrahydrofolate + NADPH + H(+) = 5-methyluridine(54) in tRNA + (6S)-5,6,7,8-tetrahydrofolate + NADP(+). In terms of biological role, catalyzes the folate-dependent formation of 5-methyl-uridine at position 54 (M-5-U54) in all tRNAs. The protein is Methylenetetrahydrofolate--tRNA-(uracil-5-)-methyltransferase TrmFO of Streptococcus agalactiae serotype Ia (strain ATCC 27591 / A909 / CDC SS700).